The following is a 186-amino-acid chain: MDTETLKKNLQEKMEKALKVLDHELKGLRTGRASVNLLDSVIVEAYGSKIPLSQVASISTPDARTINVQVWDKSMVSLVEKGITIANLGLTPATDGQLIRLPIPILTEERRKELVKLAHKYGEDTKISLRNIRRDGNEELKKLEKNNILTKDEHHSLSEQVQKLTNDYSNKVDSAIKQKEQEIMTV.

Belongs to the RRF family.

The protein resides in the cytoplasm. In terms of biological role, responsible for the release of ribosomes from messenger RNA at the termination of protein biosynthesis. May increase the efficiency of translation by recycling ribosomes from one round of translation to another. The protein is Ribosome-recycling factor of Rickettsia canadensis (strain McKiel).